We begin with the raw amino-acid sequence, 449 residues long: Packaging protein 1 (449 aa).

The interval 1–77 (METRGRRPAA…QPAKRGDMLD (77 aa)) is disordered. 171–178 (GPTGCGKS) is an ATP binding site. The DNA-binding stretch occupies residues 440-449 (RAYRARKTPK).

The protein belongs to the adenoviridae packaging protein 1 family. In terms of assembly, homodimer. Part of a genome packaging complex composed of packaging proteins 1, 2 and 3; this complex specifically binds to the packaging sequence on the left end of viral genomic DNA and performs packaging of the viral genome. Interacts with protein 33K.

It is found in the virion. The protein resides in the host nucleus. Its subcellular location is the host nucleoplasm. The protein localises to the host nucleolus. Its function is as follows. Component of the packaging machinery which encapsidates the viral DNA into preformed capsids and transcriptional activator of the viral major late promoter (MLP). Binds, along with packaging proteins 2 and 3, to the specific packaging sequence on the left end of viral genomic DNA and displays ATPase activity thereby providing the power stroke of the packaging machinery. The activity of packaging protein IVa2 is stimulated by protein 33K which acts as a terminase. May be the protein that pumps DNA into the capsid powered by ATP hydrolysis. Specifically binds to the 5'-CG-3' nucleotides of the repeats making up the packaging sequence. Component of the DEF-A and DEF-B transcription factors that bind downstream elements of the major late promoter (MLP), and stimulate transcription from the MLP after initiation of viral DNA replication. DEF-A is a heterodimer packaging proteins 1 and 2 and DEF-B is a homodimer of packaging protein 1. In Homo sapiens (Human), this protein is Packaging protein 1.